Here is a 298-residue protein sequence, read N- to C-terminus: ADP/ATP translocase 1 (298 aa).

At 1–7 (MSDQALS) the chain is on the mitochondrial intermembrane side. Ser2 is modified (N-acetylserine). The Solcar 1 repeat unit spans residues 6-98 (LSFLKDFLAG…FAFKDKYKQI (93 aa)). At Ser7 the chain carries Phosphoserine. Residues 8–37 (FLKDFLAGGVAAAISKTAVAPIERVKLLLQ) form a helical membrane-spanning segment. Residues 38–74 (VQHASKQISAEKQYKGIIDCVVRIPKEQGFLSFWRGN) are Mitochondrial matrix-facing. Lys52 bears the N6,N6,N6-trimethyllysine mark. Lys52 is subject to N6-methyllysine. The chain crosses the membrane as a helical span at residues 75–99 (LANVIRYFPTQALNFAFKDKYKQIF). Residues Arg80 and Lys92 each coordinate ADP. Topologically, residues 100–109 (LGGVDRHKQF) are mitochondrial intermembrane. The helical transmembrane segment at 110–130 (WRYFAGNLASGGAAGATSLCF) threads the bilayer. Solcar repeat units follow at residues 111–201 (RYFA…AKGM) and 212–297 (VSWM…IKKF). At 131-178 (VYPLDFARTRLAADVGKGAAQREFTGLGNCITKIFKSDGLRGLYQGFN) the chain is on the mitochondrial matrix side. N6-succinyllysine is present on Lys147. Cys160 is subject to S-nitrosocysteine. A helical transmembrane segment spans residues 179–199 (VSVQGIIIYRAAYFGVYDTAK). Topologically, residues 200-210 (GMLPDPKNVHI) are mitochondrial intermembrane. A helical transmembrane segment spans residues 211-231 (IVSWMIAQTVTAVAGLVSYPF). Over 232–273 (DTVRRRMMMQSGRKGADIMYTGTVDCWRKIAKDEGPKAFFKG) the chain is Mitochondrial matrix. Residue Arg235 participates in ADP binding. The important for transport activity stretch occupies residues 235-240 (RRRMMM). The Nucleotide carrier signature motif motif lies at 235 to 240 (RRRMMM). An N6-succinyllysine mark is found at Lys245 and Lys272. The chain crosses the membrane as a helical span at residues 274–291 (AWSNVLRGMGGAFVLVLY). The Mitochondrial intermembrane segment spans residues 292–298 (DEIKKFV).

The protein belongs to the mitochondrial carrier (TC 2.A.29) family. Monomer. Found in a complex with ARL2, ARL2BP and SLC25A4/ANT1. Interacts with ARL2BP. Interacts with TIMM44; leading to inhibit the presequence translocase TIMM23, thereby promoting stabilization of PINK1. Post-translationally, under cell death induction, transglutaminated by TGM2. Transglutamination leads to formation of covalent cross-links between a glutamine and the epsilon-amino group of a lysine residue, forming polymers. Detected in heart muscle (at protein level). Detected in heart.

It is found in the mitochondrion inner membrane. Its subcellular location is the membrane. It carries out the reaction ADP(in) + ATP(out) = ADP(out) + ATP(in). It catalyses the reaction H(+)(in) = H(+)(out). With respect to regulation, the matrix-open state (m-state) is inhibited by the membrane-permeable bongkrekic acid (BKA). The cytoplasmic-open state (c-state) is inhibited by the membrane-impermeable toxic inhibitor carboxyatractyloside (CATR). Proton transporter activity is inhibited by ADP:ATP antiporter activity. In terms of biological role, ADP:ATP antiporter that mediates import of ADP into the mitochondrial matrix for ATP synthesis, and export of ATP out to fuel the cell. Cycles between the cytoplasmic-open state (c-state) and the matrix-open state (m-state): operates by the alternating access mechanism with a single substrate-binding site intermittently exposed to either the cytosolic (c-state) or matrix (m-state) side of the inner mitochondrial membrane. In addition to its ADP:ATP antiporter activity, also involved in mitochondrial uncoupling and mitochondrial permeability transition pore (mPTP) activity. Plays a role in mitochondrial uncoupling by acting as a proton transporter: proton transport uncouples the proton flows via the electron transport chain and ATP synthase to reduce the efficiency of ATP production and cause mitochondrial thermogenesis. Proton transporter activity is inhibited by ADP:ATP antiporter activity, suggesting that SLC25A4/ANT1 acts as a master regulator of mitochondrial energy output by maintaining a delicate balance between ATP production (ADP:ATP antiporter activity) and thermogenesis (proton transporter activity). Proton transporter activity requires free fatty acids as cofactor, but does not transport it. Probably mediates mitochondrial uncoupling in tissues that do not express UCP1. Also plays a key role in mPTP opening, a non-specific pore that enables free passage of the mitochondrial membranes to solutes of up to 1.5 kDa, and which contributes to cell death. It is however unclear if SLC25A4/ANT1 constitutes a pore-forming component of mPTP or regulates it. Acts as a regulator of mitophagy independently of ADP:ATP antiporter activity: promotes mitophagy via interaction with TIMM44, leading to inhibit the presequence translocase TIMM23, thereby promoting stabilization of PINK1. This chain is ADP/ATP translocase 1, found in Bos taurus (Bovine).